A 330-amino-acid chain; its full sequence is Aspartate--ammonia ligase (330 aa).

The protein belongs to the class-II aminoacyl-tRNA synthetase family. AsnA subfamily.

The protein localises to the cytoplasm. The enzyme catalyses L-aspartate + NH4(+) + ATP = L-asparagine + AMP + diphosphate + H(+). It functions in the pathway amino-acid biosynthesis; L-asparagine biosynthesis; L-asparagine from L-aspartate (ammonia route): step 1/1. The protein is Aspartate--ammonia ligase of Enterobacter sp. (strain 638).